We begin with the raw amino-acid sequence, 396 residues long: NADH-quinone oxidoreductase subunit D (396 aa).

Belongs to the complex I 49 kDa subunit family. NDH-1 is composed of 14 different subunits. Subunits NuoB, C, D, E, F, and G constitute the peripheral sector of the complex.

It is found in the cell inner membrane. It catalyses the reaction a quinone + NADH + 5 H(+)(in) = a quinol + NAD(+) + 4 H(+)(out). NDH-1 shuttles electrons from NADH, via FMN and iron-sulfur (Fe-S) centers, to quinones in the respiratory chain. The immediate electron acceptor for the enzyme in this species is believed to be ubiquinone. Couples the redox reaction to proton translocation (for every two electrons transferred, four hydrogen ions are translocated across the cytoplasmic membrane), and thus conserves the redox energy in a proton gradient. The sequence is that of NADH-quinone oxidoreductase subunit D from Methylobacterium sp. (strain 4-46).